Reading from the N-terminus, the 266-residue chain is Glioma pathogenesis-related protein 1 (266 aa).

Positions 1-21 (MRVTLATIAWMVSFVSNYSHT) are cleaved as a signal peptide. The SCP domain maps to 38–175 (VRIHNKFRSE…SNGAHFICNY (138 aa)). Residues 233–255 (YTSLFLIVNSVILILSVIITILV) form a helical membrane-spanning segment.

Belongs to the CRISP family. According to PubMed:8973356, it is ubiquitously expressed with high levels in lung and kidney and low levels in heart and liver. Highly expressed in cell lines derived from nervous system tumors arising from glia, low or absent in non-glial-derived nervous system tumor cell lines. Also found in fetal kidney. According to PubMed:7607567 it is expressed only in brain tumor glioblastoma multiforme/astrocytoma and not in other nervous system tumors or normal fetal or adult tissues.

It is found in the membrane. This chain is Glioma pathogenesis-related protein 1 (GLIPR1), found in Homo sapiens (Human).